Reading from the N-terminus, the 89-residue chain is MANIKSAKKRVKQTVVRNERNTAQRSMLRTAVKKVIKALSIKDIAGAETAFAVAQPILDRFSSRGLIHKNKAARHKSRLTARIKALKTA.

Over residues 1 to 12 the composition is skewed to basic residues; it reads MANIKSAKKRVK. The interval 1–20 is disordered; that stretch reads MANIKSAKKRVKQTVVRNER.

The protein belongs to the bacterial ribosomal protein bS20 family.

Functionally, binds directly to 16S ribosomal RNA. The sequence is that of Small ribosomal subunit protein bS20 from Xylella fastidiosa (strain 9a5c).